Reading from the N-terminus, the 197-residue chain is EF-hand calcium-binding domain-containing protein 9 (197 aa).

Ca(2+)-binding residues include Asp58 and Asp69. EF-hand domains follow at residues 59–94 (LKKA…LLAH), 100–135 (GQFM…FLFN), and 136–171 (IQKQ…YTDK). The Ca(2+) site is built by Asp149, Asp153, Arg155, and Glu160. Residues 177–188 (KTEEKEKGERKR) are compositionally biased toward basic and acidic residues. The interval 177-197 (KTEEKEKGERKRSLYSKCHIK) is disordered.

As to quaternary structure, component of the CatSper complex or CatSpermasome composed of the core pore-forming members CATSPER1, CATSPER2, CATSPER3 and CATSPER4 as well as auxiliary members CATSPERB, CATSPERG, CATSPERD, CATSPERE, CATSPERZ, C2CD6/CATSPERT, TMEM249, TMEM262 and EFCAB9. HSPA1 may be an additional auxiliary complex member. The core complex members CATSPER1, CATSPER2, CATSPER3 and CATSPER4 form a heterotetrameric channel. The auxiliary CATSPERB, CATSPERG, CATSPERD and CATSPERE subunits form a pavilion-like structure over the pore which stabilizes the complex through interactions with CATSPER4, CATSPER3, CATSPER1 and CATSPER2 respectively. TMEM262/CATSPERH interacts with CATSPERB, further stabilizing the complex. C2CD6/CATSPERT interacts at least with CATSPERD and is required for targeting the CatSper complex in the flagellar membrane. Interacts with CATSPERZ; the interaction is direct, Ca(2+)-dependent and connects EFCAB9 with the CatSper complex. Dissociates from CATSPERZ at elevated pH.

It is found in the cytoplasm. Its subcellular location is the cell projection. It localises to the cilium. The protein localises to the flagellum. Its function is as follows. Auxiliary component of the CatSper complex, a complex involved in sperm cell hyperactivation. pH-dependent Ca(2+) sensor required to activate the CatSper channel. Sperm cell hyperactivation is needed for sperm motility which is essential late in the preparation of sperm for fertilization. Associates with the CatSper complex via direct interaction with CATSPERZ, and senses intracellular Ca(2+). Together with CATSPERZ, associates with the CatSper channel pore and is required for the two-row structure of each single CatSper channel. In Homo sapiens (Human), this protein is EF-hand calcium-binding domain-containing protein 9.